Consider the following 521-residue polypeptide: Ribonuclease Y (521 aa).

The chain crosses the membrane as a helical span at residues 3–23 (VSIWMLVITVLAAVAAYFAGS). Residues 211 to 271 (TVSVVPLPSD…VRREVARMSL (61 aa)) form the KH domain. An HD domain is found at 337–430 (IYQHSLEVAF…VQAADALSGA (94 aa)).

It belongs to the RNase Y family.

Its subcellular location is the cell membrane. Endoribonuclease that initiates mRNA decay. In Pelobacter propionicus (strain DSM 2379 / NBRC 103807 / OttBd1), this protein is Ribonuclease Y.